A 1603-amino-acid polypeptide reads, in one-letter code: Transcription factor Gibbin (1603 aa).

Disordered regions lie at residues 19–108 (PDYL…SSSR), 150–236 (LRLS…STDY), 264–285 (LEPPSPEPEPQLLDPQPRFLDP), and 394–467 (CRRR…RKGK). Pro residues predominate over residues 30–47 (GGPPTPRPLLPTRPPASP). Lysine 79 is modified (N6-acetyllysine). Residues 166-178 (SFFSSPSLANSIR) are compositionally biased toward polar residues. Residues 179-194 (SPEERATPHAKSERPS) show a composition bias toward basic and acidic residues. Over residues 216–225 (PGATAAATGL) the composition is skewed to low complexity. The residue at position 268 (serine 268) is a Phosphoserine. The span at 273-285 (PQLLDPQPRFLDP) shows a compositional bias: low complexity. The a.T hook 1 DNA-binding region spans 396 to 408 (RRKAGRGRKADAG). Over residues 428–446 (EPPPPPPPPPPALPGPGPV) the composition is skewed to pro residues. The a.T hook 2 DNA-binding region spans 544–556 (KRKRGRPPKNLLL). Residues 581–607 (MPEVKKRRRRKQKLASPQPSYAADAND) form a disordered region. Serine 596 carries the post-translational modification Phosphoserine. Lysine 609 participates in a covalent cross-link: Glycyl lysine isopeptide (Lys-Gly) (interchain with G-Cter in SUMO2). 2 disordered regions span residues 717 to 792 (LTEL…RNCG) and 806 to 827 (LESGASGRGSYYSTGAPSGQTE). The span at 737–746 (KPKRKRRSRK) shows a compositional bias: basic residues. A compositionally biased stretch (polar residues) spans 816-827 (YYSTGAPSGQTE). A phosphoserine mark is found at serine 829 and serine 846. Arginine 891 is modified (omega-N-methylarginine). Phosphoserine is present on residues serine 896 and serine 1064. 2 disordered regions span residues 1159–1198 (VSETFSESSSDSTQFNQPVGGGGFRRANSEASSSEGQSSL) and 1253–1286 (ASAAASGYPSKRSTGPRQPRGGRGGGACSAKKER). Composition is skewed to low complexity over residues 1160 to 1171 (SETFSESSSDST) and 1187 to 1198 (SEASSSEGQSSL). Serine 1187 bears the Phosphoserine mark. Phosphoserine occurs at positions 1322, 1324, and 1399. Position 1401 is a phosphothreonine (threonine 1401). Serine 1403 is modified (phosphoserine). Lysine 1409 is covalently cross-linked (Glycyl lysine isopeptide (Lys-Gly) (interchain with G-Cter in SUMO2)). The interval 1503-1533 (PHLASPPATPKADKEPLEMARPPGPPRGPAA) is disordered. 2 positions are modified to phosphoserine: serine 1507 and serine 1549.

The protein localises to the nucleus. It localises to the chromosome. Transcription factor required for the proper patterning of the epidermis, which plays a key role in early epithelial morphogenesis. Directly binds promoter and enhancer regions and acts by maintaining local enhancer-promoter chromatin architecture. Interacts with many sequence-specific zinc-finger transcription factors and methyl-CpG-binding proteins to regulate the expression of mesoderm genes that wire surface ectoderm stratification. The chain is Transcription factor Gibbin from Homo sapiens (Human).